A 173-amino-acid chain; its full sequence is RNA pyrophosphohydrolase (173 aa).

A Nudix hydrolase domain is found at G6–K149. The Nudix box signature appears at G38–G59.

This sequence belongs to the Nudix hydrolase family. RppH subfamily. It depends on a divalent metal cation as a cofactor.

In terms of biological role, accelerates the degradation of transcripts by removing pyrophosphate from the 5'-end of triphosphorylated RNA, leading to a more labile monophosphorylated state that can stimulate subsequent ribonuclease cleavage. This Shewanella piezotolerans (strain WP3 / JCM 13877) protein is RNA pyrophosphohydrolase.